We begin with the raw amino-acid sequence, 400 residues long: Octopine dehydrogenase (400 aa).

NADH is bound by residues 10–13 and 35–38; these read GGNG and FADE. Pyruvate contacts are provided by Q118 and T143. Q118 contacts substrate. An NAD(+)-binding site is contributed by C148. M206 is a binding site for L-arginine. H212 is a pyruvate binding site. H212 is a catalytic residue. Residue R324 coordinates NAD(+).

This sequence belongs to the lysopine/nopaline/octopine/opine/vitopine dehydrogenases family.

The catalysed reaction is D-octopine + NAD(+) + H2O = L-arginine + pyruvate + NADH + H(+). Catalyzes the reverse reaction of octopine dehydrogenation. Acts on L-arginine in preference to other substrates. The sequence is that of Octopine dehydrogenase from Mizuhopecten yessoensis (Japanese scallop).